The sequence spans 254 residues: 5-oxoprolinase subunit A (254 aa).

The protein belongs to the LamB/PxpA family. As to quaternary structure, forms a complex composed of PxpA, PxpB and PxpC.

It catalyses the reaction 5-oxo-L-proline + ATP + 2 H2O = L-glutamate + ADP + phosphate + H(+). In terms of biological role, catalyzes the cleavage of 5-oxoproline to form L-glutamate coupled to the hydrolysis of ATP to ADP and inorganic phosphate. This Burkholderia thailandensis (strain ATCC 700388 / DSM 13276 / CCUG 48851 / CIP 106301 / E264) protein is 5-oxoprolinase subunit A.